A 250-amino-acid polypeptide reads, in one-letter code: Isoprenyl transferase (250 aa).

Residue aspartate 26 is part of the active site. Residue aspartate 26 participates in Mg(2+) binding. Substrate contacts are provided by residues 27 to 30, tryptophan 31, arginine 39, histidine 43, and 71 to 73; these read GNGR and STE. Catalysis depends on asparagine 74, which acts as the Proton acceptor. Substrate is bound by residues tryptophan 75, arginine 77, arginine 198, and 204–206; that span reads RLS. Glutamate 217 is a Mg(2+) binding site.

Belongs to the UPP synthase family. In terms of assembly, homodimer. The cofactor is Mg(2+).

Its function is as follows. Catalyzes the condensation of isopentenyl diphosphate (IPP) with allylic pyrophosphates generating different type of terpenoids. The protein is Isoprenyl transferase of Streptococcus agalactiae serotype V (strain ATCC BAA-611 / 2603 V/R).